We begin with the raw amino-acid sequence, 207 residues long: MMLIKKIEELKNSEIKDIIDKRIQEFKSFKNKSNEEWFKELCFCILTANFTAEGGIRIQKEIGDGFLTLPREELEEKLKNLGHRFYRKRAEYIVLARRFKNIKDIVESFENEKVAREFLVRNIKGIGYKEASHFLRNVGYDDVAIIDRHILRELYENNYIDEIPKTLSRRKYLEIENILRDIGEEVNLKLSELDLYIWYLRTGKVLK.

Catalysis depends on residues Lys129 and Asp147.

This sequence belongs to the type-2 OGG1 family.

It carries out the reaction 2'-deoxyribonucleotide-(2'-deoxyribose 5'-phosphate)-2'-deoxyribonucleotide-DNA = a 3'-end 2'-deoxyribonucleotide-(2,3-dehydro-2,3-deoxyribose 5'-phosphate)-DNA + a 5'-end 5'-phospho-2'-deoxyribonucleoside-DNA + H(+). Functionally, catalyzes the excision of an oxidatively damaged form of guanine (7,8-dihydro-8-oxoguanine = 8-oxoG) from DNA. Also cleaves the DNA backbone at apurinic/apyrimidinic sites (AP sites). Has little specificity for the base opposite oxoG. This chain is 8-oxoguanine DNA glycosylase/AP lyase, found in Methanocaldococcus jannaschii (strain ATCC 43067 / DSM 2661 / JAL-1 / JCM 10045 / NBRC 100440) (Methanococcus jannaschii).